We begin with the raw amino-acid sequence, 377 residues long: Serine protease grass (377 aa).

An N-terminal signal peptide occupies residues 1–26 (MMIASSLAVLYGIAIVSSMGVQSARA). A Clip domain is found at 31-89 (DCTTPDGDQGQCMPFSSCRTIEERLTEAQKAGQKVPADYASYLQKALCGEFNGVRHFCC). 6 disulfides stabilise this stretch: Cys32–Cys88, Cys42–Cys78, Cys48–Cys89, Cys111–Cys243, Cys148–Cys164, and Cys188–Cys197. The segment at 91–118 (SANIQHNSKVMSLFKDENFDCGNFLSQR) is linker. Residues 119 to 373 (VSNGYEVKLS…YVQWITDTMA (255 aa)) form the Peptidase S1 domain. Catalysis depends on His163, which acts as the Charge relay system. Residues Glu179, Arg181, Thr184, and Asp187 each contribute to the Ca(2+) site. Asp223 (charge relay system) is an active-site residue. Residues Asn230 and Asn270 are each glycosylated (N-linked (GlcNAc...) asparagine). Disulfide bonds link Cys290–Cys304 and Cys314–Cys349. The active-site Charge relay system is the Ser318.

It belongs to the peptidase S1 family. CLIP subfamily. Proteolytically cleaved by a tryspin-like protease which is likely to activate grass.

The protein localises to the secreted. Functionally, endopeptidase. Plays a key role in innate immunity by activating the Toll pathway in response to fungal and Gram-positive bacterial infections, presumably downstream of pattern-recognition receptors (PRR), such as PGRP-SA, GNBP1 and GNBP3, and upstream of spz processing enzyme SPE. The polypeptide is Serine protease grass (Drosophila melanogaster (Fruit fly)).